The sequence spans 687 residues: Pentatricopeptide repeat-containing protein At3g09060 (687 aa).

PPR repeat units lie at residues 42–76, 77–107, 113–147, 148–182, 183–217, 218–253, 254–288, 289–323, 324–358, 359–392, 393–427, 428–462, 463–497, 498–532, 533–567, 568–602, 603–637, and 638–672; these read SAVV…ECKC, DEDV…MREI, AIRS…GVAP, NLQT…GFKP, DVFS…GVAP, DVTC…SVYP, NVKT…EREK, DLYT…KASI, DVVT…NSVN, IVSY…GYAA, DKTT…GGHL, DVYA…GVEL, NSHV…GCRP, TVVS…GWKP, DLKT…GLET, DVMM…NCTA, NLVT…GLQP, and DIIS…GIFP.

The protein belongs to the PPR family. P subfamily.

This is Pentatricopeptide repeat-containing protein At3g09060 from Arabidopsis thaliana (Mouse-ear cress).